The primary structure comprises 493 residues: Cysteine--tRNA ligase (493 aa).

Cysteine 31 is a Zn(2+) binding site. The short motif at 33–43 (PTVYGDAHLGH) is the 'HIGH' region element. Zn(2+) contacts are provided by cysteine 226, histidine 251, and glutamate 255. The short motif at 283–287 (KMGKS) is the 'KMSKS' region element. Residue lysine 286 coordinates ATP.

Belongs to the class-I aminoacyl-tRNA synthetase family. In terms of assembly, monomer. It depends on Zn(2+) as a cofactor.

The protein localises to the cytoplasm. The enzyme catalyses tRNA(Cys) + L-cysteine + ATP = L-cysteinyl-tRNA(Cys) + AMP + diphosphate. This Phocaeicola vulgatus (strain ATCC 8482 / DSM 1447 / JCM 5826 / CCUG 4940 / NBRC 14291 / NCTC 11154) (Bacteroides vulgatus) protein is Cysteine--tRNA ligase.